We begin with the raw amino-acid sequence, 166 residues long: Transcriptional repressor NrdR (166 aa).

The segment at 3 to 34 (CPFCHFVETDVIDTRKLYEGEVIRRRRRCRAC) is a zinc-finger region. One can recognise an ATP-cone domain in the interval 49–139 (LMVVKKDGTR…VYRAFTDIGK (91 aa)).

The protein belongs to the NrdR family. Zn(2+) is required as a cofactor.

Its function is as follows. Negatively regulates transcription of bacterial ribonucleotide reductase nrd genes and operons by binding to NrdR-boxes. This is Transcriptional repressor NrdR from Chloroflexus aurantiacus (strain ATCC 29364 / DSM 637 / Y-400-fl).